Consider the following 279-residue polypeptide: 4-diphosphocytidyl-2-C-methyl-D-erythritol kinase (279 aa).

The active site involves lysine 9. 93 to 103 lines the ATP pocket; the sequence is PMGAGLGGGSS. Residue aspartate 135 is part of the active site.

It belongs to the GHMP kinase family. IspE subfamily.

It carries out the reaction 4-CDP-2-C-methyl-D-erythritol + ATP = 4-CDP-2-C-methyl-D-erythritol 2-phosphate + ADP + H(+). It participates in isoprenoid biosynthesis; isopentenyl diphosphate biosynthesis via DXP pathway; isopentenyl diphosphate from 1-deoxy-D-xylulose 5-phosphate: step 3/6. Catalyzes the phosphorylation of the position 2 hydroxy group of 4-diphosphocytidyl-2C-methyl-D-erythritol. This is 4-diphosphocytidyl-2-C-methyl-D-erythritol kinase from Acinetobacter baylyi (strain ATCC 33305 / BD413 / ADP1).